We begin with the raw amino-acid sequence, 249 residues long: Adapter protein MecA (249 aa).

The protein belongs to the MecA family. As to quaternary structure, homodimer.

In terms of biological role, enables the recognition and targeting of unfolded and aggregated proteins to the ClpC protease or to other proteins involved in proteolysis. This chain is Adapter protein MecA, found in Streptococcus thermophilus (strain CNRZ 1066).